The primary structure comprises 261 residues: SURF1-like protein (261 aa).

The next 2 helical transmembrane spans lie at 17-37 (LYWA…WQIF) and 223-243 (LSYI…WVFL).

It belongs to the SURF1 family.

The protein localises to the mitochondrion inner membrane. Probably involved in the biogenesis of the COX complex. The chain is SURF1-like protein from Monosiga brevicollis (Choanoflagellate).